A 1182-amino-acid polypeptide reads, in one-letter code: Retrotransposable element SLACS 132 kDa protein (1182 aa).

Disordered stretches follow at residues 77-97 (GERS…PRER), 163-220 (DVLD…STDQ), 317-339 (RRKR…ALRL), and 418-478 (RTAR…STAP). Positions 163 to 174 (DVLDEEEQDDDL) are enriched in acidic residues. Residues 420-446 (ARREQQQQRGKDNQEEEDRQKKEEKSL) are compositionally biased toward basic and acidic residues. The segment covering 456–475 (SVRQGGQPSSSQPKRLNRWS) has biased composition (polar residues). In terms of domain architecture, Reverse transcriptase spans 560 to 790 (NADVSMEVGR…TGDTGFGTAV (231 aa)).

It catalyses the reaction DNA(n) + a 2'-deoxyribonucleoside 5'-triphosphate = DNA(n+1) + diphosphate. This Trypanosoma brucei gambiense protein is Retrotransposable element SLACS 132 kDa protein.